We begin with the raw amino-acid sequence, 608 residues long: MSDTIEFDSKAFLKDLTNQPGVYRMYNHKQDVIYVGKAKNLKNRVSSYFRSQVDSIKTQSLVKQIAHMDVTVVHSEAEAFILENNFIKKYKPRYNVLLRDDKSYPFIFLSDHQHPRLANHRGPKKRKGEYFGPYPSAWAVRESLRTMQRIFPIRQCEDSYYRARSRPCLQYQLQRCAGPCVEGLVSDEDYQAQVDLARMFLKGKNKQVIDSLVQHMERASTDLRFEAAARYRDQISALNKVQEQQWVSGNQEEMDVFGFAYRNGIASIQGLFIRDNKLLGSKSFYPKVPAEATDEEVFQSFILQFYLAGNKVIPKQIVTPLELNEQGAIEELLTKEAGRRIQFYRGARDEKRRYLDLANTNAENALIAKQGQQKSVFARYTELEKILEFEQPIQRMECFDISHTSGQLTVASCVVFNREGPFKADYRRFNIEGITPGDDYAAMAQALARRYRDVKDDSKIPDILFIDGGKGQLTQAEDYFEDWKHEKKPLLIGVAKGSSRKAGLETLILAGNHATIPLSGDSIALHLIQHIRDESHRFAITGHRARRQKDKKTSKLESIPGVGAKRRQSLLKYMGGLQGILQASRSEIANVPGISAELADTIYDHIHN.

A GIY-YIG domain is found at 18 to 96 (NQPGVYRMYN…IKKYKPRYNV (79 aa)). The 36-residue stretch at 206–241 (KQVIDSLVQHMERASTDLRFEAAARYRDQISALNKV) folds into the UVR domain.

Belongs to the UvrC family. In terms of assembly, interacts with UvrB in an incision complex.

The protein localises to the cytoplasm. Its function is as follows. The UvrABC repair system catalyzes the recognition and processing of DNA lesions. UvrC both incises the 5' and 3' sides of the lesion. The N-terminal half is responsible for the 3' incision and the C-terminal half is responsible for the 5' incision. The polypeptide is UvrABC system protein C (Pseudoalteromonas atlantica (strain T6c / ATCC BAA-1087)).